The following is a 453-amino-acid chain: Choline kinase alpha (453 aa).

The interval 22-81 (CGGSAAPTPGVGQQRDAAGELESKQLGGRSQPLALPPPPPPPLPLPPPPSPPLADEQPEP) is disordered. A compositionally biased stretch (pro residues) spans 55 to 73 (ALPPPPPPPLPLPPPPSPP). Ser71 bears the Phosphoserine mark. Residues 113–119 (RGGLSNM), Arg142, and 203–209 (QFIPSRR) contribute to the ATP site. A phosphocholine-binding site is contributed by 115 to 117 (GLS). Residue Lys243 is modified to N6-acetyllysine. Ser275 is subject to Phosphoserine. Residues Gln304 and Asp326 each contribute to the ATP site.

This sequence belongs to the choline/ethanolamine kinase family. As to quaternary structure, heterodimer with CHKB. Homodimer. Monomer; acetylation by KAT5 promotes dissociation of the homodimer and monomerization. In terms of processing, phosphorylated at Ser-275 by AMPK in response to glucose deprivation, leading to localization to lipid droplets. Post-translationally, acetylated by KAT5 at Lys-243 following phosphorylation by AMPK, leading to monomerization and conversion into a tyrosine-protein kinase. In terms of tissue distribution, testis, brain, lung, kidney and liver.

Its subcellular location is the cytoplasm. The protein resides in the cytosol. It localises to the lipid droplet. The catalysed reaction is choline + ATP = phosphocholine + ADP + H(+). The enzyme catalyses ethanolamine + ATP = phosphoethanolamine + ADP + H(+). It carries out the reaction L-tyrosyl-[protein] + ATP = O-phospho-L-tyrosyl-[protein] + ADP + H(+). It functions in the pathway phospholipid metabolism; phosphatidylcholine biosynthesis; phosphocholine from choline: step 1/1. It participates in phospholipid metabolism; phosphatidylethanolamine biosynthesis; phosphatidylethanolamine from ethanolamine: step 1/3. Its function is as follows. Plays a key role in phospholipid biosynthesis by catalyzing the phosphorylation of free choline to phosphocholine, the first step in phosphatidylcholine biosynthesis. Also phosphorylates ethanolamine, thereby contributing to phosphatidylethanolamine biosynthesis. Has higher activity with choline. In terms of biological role, this isoform plays a key role in lipolysis of lipid droplets following glucose deprivation. In response to glucose deprivation, phosphorylated by AMPK, promoting localization to lipid droplets. Phosphorylation is followed by acetylation by KAT5, leading to dissociation of the homodimer into a monomer. Monomeric CHKA isoform 1 is converted into a tyrosine-protein kinase, which phosphorylates lipid droplet structural proteins PLIN2 and PLIN3, leading to lipolysis of lipid droplets. This Rattus norvegicus (Rat) protein is Choline kinase alpha (Chka).